The following is a 508-amino-acid chain: MDSRLHRLINLEVTPGKDVRKTAIIGTIGPKTNNVDTLVALRKAGLNIVRMNFSHGSYEYHQSVIDNARKSEQVYPGRPLAIALDTKGPEIRTGTNVDDVDYPIPPNHEMIFTTDDKYAKACDDKIMYVDYKNITKVIQPGKVIYVDDGVLSFEVLEVVDDKTLKVKSLNAGKISSHKGVNLPGTDVDLPALSEKDKEDLRFGVKNGVHMIFASFIRTAQDVLTIREVLGEEGKDIKVIVKIENQQGVNNFDEILEVAHGVMVARGDLGIEIPAPQVLAVQKKLIAKCNLAGKPVICATQMLESMTFNPRPTRAEVSDVGNAILDGADCVMLSGETAKGNYPINAVTTMAETAIIAERAIAYMPLYDDLRNCTPKPTSTTETVAASAVAAVQEQGAKLILVLSTSGNTARLVSKYRPQCPIVLVTRNPRTARFSHLFRGVFPFVYEKEPLDDWSEDTHARLRFGVDMAKEYGFVKNGDAVISIQGFKGGVGHSNTMRVSIVGGEKEDI.

Arg-50 serves as a coordination point for substrate. Residues Asn-52, Ser-54, Asp-85, and Thr-86 each contribute to the K(+) site. 52-55 (NFSH) provides a ligand contact to ATP. Residues Arg-92 and Lys-178 each contribute to the ATP site. Glu-243 contributes to the Mg(2+) binding site. Positions 266, 267, and 299 each coordinate substrate. Asp-267 serves as a coordination point for Mg(2+).

It belongs to the pyruvate kinase family. Homotetramer. Mg(2+) serves as cofactor. K(+) is required as a cofactor.

The enzyme catalyses pyruvate + ATP = phosphoenolpyruvate + ADP + H(+). It participates in carbohydrate degradation; glycolysis; pyruvate from D-glyceraldehyde 3-phosphate: step 5/5. The chain is Pyruvate kinase 2 (PYK2) from Candida glabrata (strain ATCC 2001 / BCRC 20586 / JCM 3761 / NBRC 0622 / NRRL Y-65 / CBS 138) (Yeast).